We begin with the raw amino-acid sequence, 609 residues long: Heat shock factor protein (609 aa).

A compositionally biased stretch (polar residues) spans 1 to 33 (MIQTASTISSNGGTNQGMESSSANSPEMNGTQN). Residues 1-47 (MIQTASTISSNGGTNQGMESSSANSPEMNGTQNSMSVGMSGSGSSQN) form a disordered region. Low complexity predominate over residues 34–45 (SMSVGMSGSGSS). The DNA-binding element occupies 50-156 (ITQFSNKLYN…LLCLVTRKKA (107 aa)). Disordered regions lie at residues 255–298 (PTVS…GKYR), 310–371 (SSFN…TDPK), 411–445 (NNTS…QPVQ), and 567–609 (SNGN…SIGA). Polar residues-rich tracts occupy residues 257–277 (VSPT…TTAN), 339–360 (DSFN…TDVP), 422–443 (YRGS…NLQP), and 567–597 (SNGN…SSPR). Position 350 is a phosphoserine (Ser350). Over residues 598–609 (QVRKKRKSSIGA) the composition is skewed to basic residues.

The protein belongs to the HSF family. In terms of assembly, homotrimer.

Its subcellular location is the nucleus. Functionally, DNA-binding protein that specifically binds heat shock promoter elements (HSE) and activates transcription. Also required for growth at normal temperatures. The sequence is that of Heat shock factor protein (hsf1) from Schizosaccharomyces pombe (strain 972 / ATCC 24843) (Fission yeast).